An 88-amino-acid chain; its full sequence is Translation initiation factor IF-1 2 (88 aa).

The S1-like domain maps to 1–72 (MAKEELIELQ…TKGRINFRHK (72 aa)).

It belongs to the IF-1 family. As to quaternary structure, component of the 30S ribosomal translation pre-initiation complex which assembles on the 30S ribosome in the order IF-2 and IF-3, IF-1 and N-formylmethionyl-tRNA(fMet); mRNA recruitment can occur at any time during PIC assembly.

Its subcellular location is the cytoplasm. Its function is as follows. One of the essential components for the initiation of protein synthesis. Stabilizes the binding of IF-2 and IF-3 on the 30S subunit to which N-formylmethionyl-tRNA(fMet) subsequently binds. Helps modulate mRNA selection, yielding the 30S pre-initiation complex (PIC). Upon addition of the 50S ribosomal subunit IF-1, IF-2 and IF-3 are released leaving the mature 70S translation initiation complex. The sequence is that of Translation initiation factor IF-1 2 from Bordetella avium (strain 197N).